The chain runs to 313 residues: Formimidoylglutamase (313 aa).

Mn(2+)-binding residues include His130, Asp155, His157, Asp159, Asp241, and Asp243.

It belongs to the arginase family. Requires Mn(2+) as cofactor.

The enzyme catalyses N-formimidoyl-L-glutamate + H2O = formamide + L-glutamate. The protein operates within amino-acid degradation; L-histidine degradation into L-glutamate; L-glutamate from N-formimidoyl-L-glutamate (hydrolase route): step 1/1. Catalyzes the conversion of N-formimidoyl-L-glutamate to L-glutamate and formamide. The polypeptide is Formimidoylglutamase (Salmonella heidelberg (strain SL476)).